Consider the following 103-residue polypeptide: Large ribosomal subunit protein uL23 (103 aa).

The protein belongs to the universal ribosomal protein uL23 family. Part of the 50S ribosomal subunit. Contacts protein L29, and trigger factor when it is bound to the ribosome.

One of the early assembly proteins it binds 23S rRNA. One of the proteins that surrounds the polypeptide exit tunnel on the outside of the ribosome. Forms the main docking site for trigger factor binding to the ribosome. The sequence is that of Large ribosomal subunit protein uL23 from Chlorobaculum tepidum (strain ATCC 49652 / DSM 12025 / NBRC 103806 / TLS) (Chlorobium tepidum).